A 1049-amino-acid polypeptide reads, in one-letter code: Tegument protein pp150 (1049 aa).

Disordered regions lie at residues 397–549 and 659–945; these read EERQ…DPRF and PFRM…YPAV. Over residues 428 to 439 the composition is skewed to acidic residues; that stretch reads ADEDDDDDDDDE. Residues 452–462 show a composition bias toward gly residues; that stretch reads SGKGAASGGGV. Over residues 463–474 the composition is skewed to low complexity; that stretch reads SSIFSGLLSSGS. Residues 475 to 490 are compositionally biased toward polar residues; it reads QKPTSGPLNIPQQQQR. Positions 509-525 are enriched in basic and acidic residues; sequence VRRDSAWDVRPLTETRG. Residues 672–688 are compositionally biased toward low complexity; the sequence is TVSTTPRRPSTPRAAVT. Acidic residues predominate over residues 710–722; it reads PVEDSEEEDDDSS. The segment covering 731 to 743 has biased composition (polar residues); that stretch reads GHTTPSSDYNNDV. The segment covering 745–757 has biased composition (low complexity); sequence SPPSQTPEQSTPS. 3 stretches are compositionally biased toward polar residues: residues 766–776, 791–800, and 808–835; these read SPMTTTSTSQK, RAQTVTSTPV, and VSGT…SRNV. Composition is skewed to low complexity over residues 836–855, 866–884, 912–928, and 936–945; these read TSGA…ASAS, SPAT…SPAK, VVGR…APGR, and ASTTPTYPAV. O-linked (GlcNAc) serine; by host glycosylation occurs at S922. S953 carries O-linked (GlcNAc) serine; by host glycosylation. Residues 1006-1032 form a disordered region; that stretch reads DLSSPQKSGTGPQPGSAGMGGAKTPSD. Polar residues predominate over residues 1008 to 1018; it reads SSPQKSGTGPQ.

It belongs to the herpesviridae large structural phosphoprotein family. Interacts with host BICD1 and RAB6A. Interacts with small capsid protein UL48A; this interaction links together the capsid and pp150. Interacts with host CCNA2. In terms of processing, phosphorylated by host CCNA2.

The protein resides in the virion tegument. Its subcellular location is the host cytoplasm. It localises to the host nucleus. Participates in the last steps of viral maturation and release. Associates with nuclear capsids prior to DNA encapsidation and later preserves the integrity of nucleocapsids through secondary envelopment at the assembly compartment. Interacts with host CCNA2 and thereby blocks the onset of lytic gene expression to promote establishment of a quiescent state of infection in undifferentiated cells. This is Tegument protein pp150 (UL32) from Homo sapiens (Human).